The sequence spans 357 residues: S-adenosylmethionine:tRNA ribosyltransferase-isomerase (357 aa).

This sequence belongs to the QueA family. Monomer.

It localises to the cytoplasm. It catalyses the reaction 7-aminomethyl-7-carbaguanosine(34) in tRNA + S-adenosyl-L-methionine = epoxyqueuosine(34) in tRNA + adenine + L-methionine + 2 H(+). It functions in the pathway tRNA modification; tRNA-queuosine biosynthesis. Its function is as follows. Transfers and isomerizes the ribose moiety from AdoMet to the 7-aminomethyl group of 7-deazaguanine (preQ1-tRNA) to give epoxyqueuosine (oQ-tRNA). This is S-adenosylmethionine:tRNA ribosyltransferase-isomerase from Buchnera aphidicola subsp. Acyrthosiphon pisum (strain APS) (Acyrthosiphon pisum symbiotic bacterium).